Here is a 74-residue protein sequence, read N- to C-terminus: Large ribosomal subunit protein bL31 (74 aa).

Cysteine 16, cysteine 18, cysteine 37, and cysteine 40 together coordinate Zn(2+).

Belongs to the bacterial ribosomal protein bL31 family. Type A subfamily. As to quaternary structure, part of the 50S ribosomal subunit. Requires Zn(2+) as cofactor.

Its function is as follows. Binds the 23S rRNA. The protein is Large ribosomal subunit protein bL31 of Koribacter versatilis (strain Ellin345).